Reading from the N-terminus, the 1377-residue chain is DNA-directed RNA polymerase subunit beta (1377 aa).

This sequence belongs to the RNA polymerase beta chain family. The RNAP catalytic core consists of 2 alpha, 1 beta, 1 beta' and 1 omega subunit. When a sigma factor is associated with the core the holoenzyme is formed, which can initiate transcription.

The enzyme catalyses RNA(n) + a ribonucleoside 5'-triphosphate = RNA(n+1) + diphosphate. Its function is as follows. DNA-dependent RNA polymerase catalyzes the transcription of DNA into RNA using the four ribonucleoside triphosphates as substrates. The sequence is that of DNA-directed RNA polymerase subunit beta from Brucella abortus (strain S19).